The sequence spans 425 residues: Serine hydroxymethyltransferase (425 aa).

(6S)-5,6,7,8-tetrahydrofolate-binding positions include leucine 124 and 128–130 (GHL). The residue at position 233 (lysine 233) is an N6-(pyridoxal phosphate)lysine.

The protein belongs to the SHMT family. In terms of assembly, homodimer. Pyridoxal 5'-phosphate is required as a cofactor.

It is found in the cytoplasm. The catalysed reaction is (6R)-5,10-methylene-5,6,7,8-tetrahydrofolate + glycine + H2O = (6S)-5,6,7,8-tetrahydrofolate + L-serine. Its pathway is one-carbon metabolism; tetrahydrofolate interconversion. It functions in the pathway amino-acid biosynthesis; glycine biosynthesis; glycine from L-serine: step 1/1. In terms of biological role, catalyzes the reversible interconversion of serine and glycine with tetrahydrofolate (THF) serving as the one-carbon carrier. This reaction serves as the major source of one-carbon groups required for the biosynthesis of purines, thymidylate, methionine, and other important biomolecules. Also exhibits THF-independent aldolase activity toward beta-hydroxyamino acids, producing glycine and aldehydes, via a retro-aldol mechanism. The protein is Serine hydroxymethyltransferase of Clavibacter sepedonicus (Clavibacter michiganensis subsp. sepedonicus).